Reading from the N-terminus, the 400-residue chain is Elongation factor Tu (400 aa).

The 201-residue stretch at 10–210 folds into the tr-type G domain; sequence KPHCNVGTIG…VDTYIPIPPR (201 aa). Residues 19–26 are G1; sequence GHVDHGKT. Residue 19–26 coordinates GTP; it reads GHVDHGKT. T26 provides a ligand contact to Mg(2+). The G2 stretch occupies residues 60–64; that stretch reads GLTIA. The interval 81–84 is G3; sequence DCPG. GTP contacts are provided by residues 81-85 and 136-139; these read DCPGH and NKCD. Residues 136–139 form a G4 region; the sequence is NKCD. The G5 stretch occupies residues 174–176; the sequence is SAI.

Belongs to the TRAFAC class translation factor GTPase superfamily. Classic translation factor GTPase family. EF-Tu/EF-1A subfamily. Monomer.

The protein localises to the cytoplasm. The catalysed reaction is GTP + H2O = GDP + phosphate + H(+). Functionally, GTP hydrolase that promotes the GTP-dependent binding of aminoacyl-tRNA to the A-site of ribosomes during protein biosynthesis. The protein is Elongation factor Tu of Dehalococcoides mccartyi (strain CBDB1).